Reading from the N-terminus, the 59-residue chain is Large ribosomal subunit protein uL30 (59 aa).

Belongs to the universal ribosomal protein uL30 family. Part of the 50S ribosomal subunit.

This is Large ribosomal subunit protein uL30 from Histophilus somni (strain 129Pt) (Haemophilus somnus).